Here is a 537-residue protein sequence, read N- to C-terminus: Putative cysteine ligase BshC (537 aa).

It belongs to the BshC family.

Involved in bacillithiol (BSH) biosynthesis. May catalyze the last step of the pathway, the addition of cysteine to glucosamine malate (GlcN-Mal) to generate BSH. The protein is Putative cysteine ligase BshC of Staphylococcus saprophyticus subsp. saprophyticus (strain ATCC 15305 / DSM 20229 / NCIMB 8711 / NCTC 7292 / S-41).